The sequence spans 482 residues: Long chain base biosynthesis protein 1c (482 aa).

A helical membrane pass occupies residues 33 to 53; sequence FGIHIDGHLVVEGLLIAAILF.

It belongs to the class-II pyridoxal-phosphate-dependent aminotransferase family. In terms of assembly, heterodimer with LCB2. Component of the serine palmitoyltransferase (SPT) complex, composed of LCB1 and LCB2. Pyridoxal 5'-phosphate is required as a cofactor.

It localises to the endoplasmic reticulum membrane. The enzyme catalyses L-serine + hexadecanoyl-CoA + H(+) = 3-oxosphinganine + CO2 + CoA. It functions in the pathway lipid metabolism; sphingolipid metabolism. In terms of biological role, serine palmitoyltransferase (SPT). The heterodimer formed with LCB2 constitutes the catalytic core. In Oryza sativa subsp. japonica (Rice), this protein is Long chain base biosynthesis protein 1c.